The chain runs to 208 residues: NAD(P)H-quinone oxidoreductase subunit I (208 aa).

4Fe-4S ferredoxin-type domains lie at 55-84 and 95-124; these read GRIH…VDWV and RNYS…MTEE. Residues cysteine 64, cysteine 67, cysteine 70, cysteine 74, cysteine 104, cysteine 107, cysteine 110, and cysteine 114 each coordinate [4Fe-4S] cluster.

This sequence belongs to the complex I 23 kDa subunit family. In terms of assembly, NDH-1 is composed of at least 11 different subunits. Requires [4Fe-4S] cluster as cofactor.

Its subcellular location is the cellular thylakoid membrane. The catalysed reaction is a plastoquinone + NADH + (n+1) H(+)(in) = a plastoquinol + NAD(+) + n H(+)(out). The enzyme catalyses a plastoquinone + NADPH + (n+1) H(+)(in) = a plastoquinol + NADP(+) + n H(+)(out). Functionally, NDH-1 shuttles electrons from an unknown electron donor, via FMN and iron-sulfur (Fe-S) centers, to quinones in the respiratory and/or the photosynthetic chain. The immediate electron acceptor for the enzyme in this species is believed to be plastoquinone. Couples the redox reaction to proton translocation, and thus conserves the redox energy in a proton gradient. This is NAD(P)H-quinone oxidoreductase subunit I from Prochlorococcus marinus (strain MIT 9312).